A 424-amino-acid polypeptide reads, in one-letter code: Serine--tRNA ligase (424 aa).

Position 230 to 232 (230 to 232) interacts with L-serine; sequence TAE. 261–263 contributes to the ATP binding site; sequence RSE. Position 284 (Glu-284) interacts with L-serine. Residue 348–351 coordinates ATP; that stretch reads EISS. Ser-384 lines the L-serine pocket.

This sequence belongs to the class-II aminoacyl-tRNA synthetase family. Type-1 seryl-tRNA synthetase subfamily. As to quaternary structure, homodimer. The tRNA molecule binds across the dimer.

The protein resides in the cytoplasm. It catalyses the reaction tRNA(Ser) + L-serine + ATP = L-seryl-tRNA(Ser) + AMP + diphosphate + H(+). The catalysed reaction is tRNA(Sec) + L-serine + ATP = L-seryl-tRNA(Sec) + AMP + diphosphate + H(+). The protein operates within aminoacyl-tRNA biosynthesis; selenocysteinyl-tRNA(Sec) biosynthesis; L-seryl-tRNA(Sec) from L-serine and tRNA(Sec): step 1/1. Catalyzes the attachment of serine to tRNA(Ser). Is also able to aminoacylate tRNA(Sec) with serine, to form the misacylated tRNA L-seryl-tRNA(Sec), which will be further converted into selenocysteinyl-tRNA(Sec). This Nitratidesulfovibrio vulgaris (strain ATCC 29579 / DSM 644 / CCUG 34227 / NCIMB 8303 / VKM B-1760 / Hildenborough) (Desulfovibrio vulgaris) protein is Serine--tRNA ligase.